A 596-amino-acid chain; its full sequence is Elongation factor 4 (596 aa).

One can recognise a tr-type G domain in the interval 2 to 184 (RNIRNFSIIA…AIVHRIPPPK (183 aa)). GTP-binding positions include 14–19 (DHGKST) and 131–134 (NKID).

It belongs to the TRAFAC class translation factor GTPase superfamily. Classic translation factor GTPase family. LepA subfamily.

It localises to the cell inner membrane. The catalysed reaction is GTP + H2O = GDP + phosphate + H(+). Required for accurate and efficient protein synthesis under certain stress conditions. May act as a fidelity factor of the translation reaction, by catalyzing a one-codon backward translocation of tRNAs on improperly translocated ribosomes. Back-translocation proceeds from a post-translocation (POST) complex to a pre-translocation (PRE) complex, thus giving elongation factor G a second chance to translocate the tRNAs correctly. Binds to ribosomes in a GTP-dependent manner. The protein is Elongation factor 4 of Xanthomonas euvesicatoria pv. vesicatoria (strain 85-10) (Xanthomonas campestris pv. vesicatoria).